We begin with the raw amino-acid sequence, 448 residues long: Ribosomal protein uS12 methylthiotransferase RimO (448 aa).

The MTTase N-terminal domain maps to 13 to 128; the sequence is KSFFITTLGC…AGEILRKNFP (116 aa). [4Fe-4S] cluster contacts are provided by C22, C58, C91, C167, C171, and C174. Residues 153–382 enclose the Radical SAM core domain; sequence NYSKPYSYVK…AYLGTLKTIH (230 aa). In terms of domain architecture, TRAM spans 383-448; that stretch reads QNRIGKIYPC…ELDMSGTWVD (66 aa).

The protein belongs to the methylthiotransferase family. RimO subfamily. It depends on [4Fe-4S] cluster as a cofactor.

Its subcellular location is the cytoplasm. The enzyme catalyses L-aspartate(89)-[ribosomal protein uS12]-hydrogen + (sulfur carrier)-SH + AH2 + 2 S-adenosyl-L-methionine = 3-methylsulfanyl-L-aspartate(89)-[ribosomal protein uS12]-hydrogen + (sulfur carrier)-H + 5'-deoxyadenosine + L-methionine + A + S-adenosyl-L-homocysteine + 2 H(+). Catalyzes the methylthiolation of an aspartic acid residue of ribosomal protein uS12. This is Ribosomal protein uS12 methylthiotransferase RimO from Leptospira biflexa serovar Patoc (strain Patoc 1 / Ames).